We begin with the raw amino-acid sequence, 325 residues long: uncharacterized protein (325 aa).

The HD domain maps to 49–151 (RYEHSIGVML…ELCADRTDYT (103 aa)).

This is an uncharacterized protein from Bacillus subtilis (strain 168).